Consider the following 210-residue polypeptide: Large ribosomal subunit protein uL3 (210 aa).

A disordered region spans residues 134-153; that stretch reads THGNSLSHRAPGSIGQNQTP. N5-methylglutamine is present on glutamine 151.

It belongs to the universal ribosomal protein uL3 family. Part of the 50S ribosomal subunit. Forms a cluster with proteins L14 and L19. In terms of processing, methylated by PrmB.

Its function is as follows. One of the primary rRNA binding proteins, it binds directly near the 3'-end of the 23S rRNA, where it nucleates assembly of the 50S subunit. This is Large ribosomal subunit protein uL3 from Aeromonas salmonicida (strain A449).